Consider the following 137-residue polypeptide: Ribosome-binding factor A (137 aa).

This sequence belongs to the RbfA family. As to quaternary structure, monomer. Binds 30S ribosomal subunits, but not 50S ribosomal subunits or 70S ribosomes.

It localises to the cytoplasm. In terms of biological role, one of several proteins that assist in the late maturation steps of the functional core of the 30S ribosomal subunit. Associates with free 30S ribosomal subunits (but not with 30S subunits that are part of 70S ribosomes or polysomes). Required for efficient processing of 16S rRNA. May interact with the 5'-terminal helix region of 16S rRNA. The sequence is that of Ribosome-binding factor A from Erwinia tasmaniensis (strain DSM 17950 / CFBP 7177 / CIP 109463 / NCPPB 4357 / Et1/99).